The following is a 1028-amino-acid chain: RNA cytidine acetyltransferase 1 (1028 aa).

Residues 286–295 (GRGKSAALGL) and arginine 460 contribute to the ATP site. The region spanning 548 to 731 (VLLGPVDESK…FAPFYISQIP (184 aa)) is the N-acetyltransferase domain. Acetyl-CoA is bound by residues 619-621 (IAV), 626-632 (MKMGYGS), and lysine 719. Residues 989 to 1028 (ISIESTKTDNKKEKPSGFDKSAKKRGNDKHSSTSNKKRRA) are disordered. Residues 994–1009 (TKTDNKKEKPSGFDKS) show a composition bias toward basic and acidic residues.

It belongs to the RNA cytidine acetyltransferase family. NAT10 subfamily.

It localises to the nucleus. It is found in the nucleolus. The catalysed reaction is a cytidine in 18S rRNA + acetyl-CoA + ATP + H2O = an N(4)-acetylcytidine in 18S rRNA + ADP + phosphate + CoA + H(+). It carries out the reaction a cytidine in tRNA + acetyl-CoA + ATP + H2O = an N(4)-acetylcytidine in tRNA + ADP + phosphate + CoA + H(+). Functionally, RNA cytidine acetyltransferase with specificity toward both 18S rRNA and tRNAs. Catalyzes the formation of N(4)-acetylcytidine (ac4C) in 18S rRNA. Required for early nucleolar cleavages of precursor rRNA at sites A0, A1 and A2 during 18S rRNA synthesis. Catalyzes the formation of ac4C in serine and leucine tRNAs. Requires a tRNA-binding adapter protein for full tRNA acetyltransferase activity but not for 18S rRNA acetylation. The sequence is that of RNA cytidine acetyltransferase 1 from Arabidopsis thaliana (Mouse-ear cress).